The sequence spans 350 residues: MPVLHNRISNDELKAKMLAESEPRTTISFYKYFTIASPQQTRDALYQVFTALDVFGRVYLAHEGINAQISVPQSKVETFRQQLYTFDPALDGVRLNIALEDDGKSFWVLRMKVRDRIVADGIDDPTFDASNVGDYLKAADVNAMLDDPDAVFIDMRNHYEYEVGHFENALEIPADTFREQLPKAVEMLREHADKKIVMYCTGGIRCEKASAWMKHNGFNKVWHIEGGIIEYARRAREQGLPVRFIGKNFVFDERMGERISDEVIAHCHQCGAPCDSHTNCKNDGCHLLFIQCPQCASKFNGCCSEQCCEELALPEEEQRRRRAGRENGNKIFNKSRGRLNSKLSIPDPAE.

Positions 146–240 (DDPDAVFIDM…YARRAREQGL (95 aa)) constitute a Rhodanese domain. The active-site Cysteine persulfide intermediate is the C200. Residues 319–328 (RRRRAGRENG) are compositionally biased toward basic and acidic residues. The segment at 319–350 (RRRRAGRENGNKIFNKSRGRLNSKLSIPDPAE) is disordered.

It belongs to the TrhO family.

It carries out the reaction uridine(34) in tRNA + AH2 + O2 = 5-hydroxyuridine(34) in tRNA + A + H2O. In terms of biological role, catalyzes oxygen-dependent 5-hydroxyuridine (ho5U) modification at position 34 in tRNAs. The chain is tRNA uridine(34) hydroxylase from Salmonella heidelberg (strain SL476).